The following is a 193-amino-acid chain: Pyridoxal 5'-phosphate synthase subunit PdxT (193 aa).

50–52 is an L-glutamine binding site; the sequence is GES. The Nucleophile role is filled by Cys-82. L-glutamine-binding positions include Arg-109 and 136–137; that span reads IR. Residues His-172 and Glu-174 each act as charge relay system in the active site.

It belongs to the glutaminase PdxT/SNO family. In terms of assembly, in the presence of PdxS, forms a dodecamer of heterodimers. Only shows activity in the heterodimer.

The enzyme catalyses aldehydo-D-ribose 5-phosphate + D-glyceraldehyde 3-phosphate + L-glutamine = pyridoxal 5'-phosphate + L-glutamate + phosphate + 3 H2O + H(+). The catalysed reaction is L-glutamine + H2O = L-glutamate + NH4(+). It participates in cofactor biosynthesis; pyridoxal 5'-phosphate biosynthesis. Its function is as follows. Catalyzes the hydrolysis of glutamine to glutamate and ammonia as part of the biosynthesis of pyridoxal 5'-phosphate. The resulting ammonia molecule is channeled to the active site of PdxS. This is Pyridoxal 5'-phosphate synthase subunit PdxT from Streptococcus pneumoniae (strain JJA).